A 149-amino-acid polypeptide reads, in one-letter code: Large ribosomal subunit protein bL9 (149 aa).

Belongs to the bacterial ribosomal protein bL9 family.

Its function is as follows. Binds to the 23S rRNA. The protein is Large ribosomal subunit protein bL9 of Haemophilus influenzae (strain PittGG).